Here is a 1042-residue protein sequence, read N- to C-terminus: Isoleucine--tRNA ligase (1042 aa).

The 'HIGH' region signature appears at 59–69 (PFANGLPHYGH). The 'KMSKS' region signature appears at 619 to 623 (KMSKS). K622 lines the ATP pocket.

Belongs to the class-I aminoacyl-tRNA synthetase family. IleS type 2 subfamily. In terms of assembly, monomer. It depends on Zn(2+) as a cofactor.

The protein resides in the cytoplasm. It catalyses the reaction tRNA(Ile) + L-isoleucine + ATP = L-isoleucyl-tRNA(Ile) + AMP + diphosphate. Its function is as follows. Catalyzes the attachment of isoleucine to tRNA(Ile). As IleRS can inadvertently accommodate and process structurally similar amino acids such as valine, to avoid such errors it has two additional distinct tRNA(Ile)-dependent editing activities. One activity is designated as 'pretransfer' editing and involves the hydrolysis of activated Val-AMP. The other activity is designated 'posttransfer' editing and involves deacylation of mischarged Val-tRNA(Ile). This is Isoleucine--tRNA ligase from Nocardia farcinica (strain IFM 10152).